We begin with the raw amino-acid sequence, 338 residues long: Galactinol synthase 2 (338 aa).

Lys-105 is an active-site residue. Positions 121, 123, and 258 each coordinate Mn(2+).

The protein belongs to the glycosyltransferase 8 family. Galactosyltransferase subfamily. A divalent metal cation is required as a cofactor.

The protein resides in the cytoplasm. The enzyme catalyses myo-inositol + UDP-alpha-D-galactose = alpha-D-galactosyl-(1-&gt;3)-1D-myo-inositol + UDP + H(+). In terms of biological role, galactinol synthase involved in the biosynthesis of raffinose family oligosaccharides (RFOs) that function as osmoprotectants. May promote plant stress tolerance. The polypeptide is Galactinol synthase 2 (GOLS2) (Solanum lycopersicum (Tomato)).